The following is a 377-amino-acid chain: D-alanine--D-alanine ligase (377 aa).

In terms of domain architecture, ATP-grasp spans 140 to 349; sequence KELLTVNNIR…NVELVDKLID (210 aa). 170–225 is an ATP binding site; it reads VKDLGDVVFVKAANQGSSVGVSRAKTADEFEAALTDSFQYDYKVLIEAAVKGPREL. 3 residues coordinate Mg(2+): D303, E316, and N318.

The protein belongs to the D-alanine--D-alanine ligase family. Mg(2+) is required as a cofactor. The cofactor is Mn(2+).

It localises to the cytoplasm. It catalyses the reaction 2 D-alanine + ATP = D-alanyl-D-alanine + ADP + phosphate + H(+). The protein operates within cell wall biogenesis; peptidoglycan biosynthesis. Functionally, cell wall formation. In Leuconostoc citreum (strain KM20), this protein is D-alanine--D-alanine ligase.